A 428-amino-acid polypeptide reads, in one-letter code: MMTYQEIFNEIKNKAYFKNHRHVLIAVSGGVDSMNLLHFLYLFQDKLKIRIGIAHVNHKQRSESDSEEAYLKCWAKKHDIPIYVSNFEGIFSEKAARDWRYAFFKSIMLKNNYSALVTAHHSDDQAETILMRLIRGSRLRHLSGIKSVQPFANGQLIRPFLTFSKKDLPEIFHFEDSSNRELSFLRNRVRNNYLPLLKQENPRFIQGLNQLALENSLLFQAFKELTNHITTTDLTEFNEQSKSIQYFLLQDYLEGFPDLDLKKSQFTQLLQIIQTAKQGYYYLKKDYYIFIDKFSFKITKIVPKTELVKDEKMLEYDSNLCYRDYCFSFMPKSNEDQGQVSIPLFSLSSIKLRSRQSGDYISFGHFSKKIRRLFIDEKFTIAERQNAIIGEQDEQIIFVLIGNKTYLRKACKHDIMLAKLYIDKLEKG.

28-33 (SGGVDS) is a binding site for ATP.

This sequence belongs to the tRNA(Ile)-lysidine synthase family.

The protein localises to the cytoplasm. The enzyme catalyses cytidine(34) in tRNA(Ile2) + L-lysine + ATP = lysidine(34) in tRNA(Ile2) + AMP + diphosphate + H(+). In terms of biological role, ligates lysine onto the cytidine present at position 34 of the AUA codon-specific tRNA(Ile) that contains the anticodon CAU, in an ATP-dependent manner. Cytidine is converted to lysidine, thus changing the amino acid specificity of the tRNA from methionine to isoleucine. This chain is tRNA(Ile)-lysidine synthase, found in Streptococcus pyogenes serotype M3 (strain ATCC BAA-595 / MGAS315).